A 305-amino-acid chain; its full sequence is tRNA dimethylallyltransferase 1 (305 aa).

10-17 lines the ATP pocket; it reads GPTASGKT. 12–17 is a binding site for substrate; the sequence is TASGKT. The segment at 35-38 is interaction with substrate tRNA; sequence DSRQ.

The protein belongs to the IPP transferase family. Monomer. Mg(2+) serves as cofactor.

The enzyme catalyses adenosine(37) in tRNA + dimethylallyl diphosphate = N(6)-dimethylallyladenosine(37) in tRNA + diphosphate. Catalyzes the transfer of a dimethylallyl group onto the adenine at position 37 in tRNAs that read codons beginning with uridine, leading to the formation of N6-(dimethylallyl)adenosine (i(6)A). In Syntrophus aciditrophicus (strain SB), this protein is tRNA dimethylallyltransferase 1.